The following is a 473-amino-acid chain: Glutamate--tRNA ligase (473 aa).

Residues 13–23 carry the 'HIGH' region motif; sequence PSPTGFLHVGG. Residues 240-244 carry the 'KMSKS' region motif; sequence KLSKR. Position 243 (K243) interacts with ATP.

Belongs to the class-I aminoacyl-tRNA synthetase family. Glutamate--tRNA ligase type 1 subfamily. In terms of assembly, monomer.

It localises to the cytoplasm. The catalysed reaction is tRNA(Glu) + L-glutamate + ATP = L-glutamyl-tRNA(Glu) + AMP + diphosphate. Its function is as follows. Catalyzes the attachment of glutamate to tRNA(Glu) in a two-step reaction: glutamate is first activated by ATP to form Glu-AMP and then transferred to the acceptor end of tRNA(Glu). This is Glutamate--tRNA ligase from Shewanella denitrificans (strain OS217 / ATCC BAA-1090 / DSM 15013).